Here is a 78-residue protein sequence, read N- to C-terminus: uncharacterized protein (78 aa).

This is an uncharacterized protein from Schizosaccharomyces pombe (strain 972 / ATCC 24843) (Fission yeast).